The sequence spans 106 residues: MPLTPPPDHTKVLLVAAIGLSIVASILTYSRNTLPQVGDHSHLLPHGGVYKDGTKTIVYGGPRKLNSLEGGFNLPVQPWFLVILLSAAIFLLSCRSGHRRVCGQCH.

Over 1-9 (MPLTPPPDH) the chain is Cytoplasmic. Residues 10 to 30 (TKVLLVAAIGLSIVASILTYS) traverse the membrane as a helical segment. Over 31 to 71 (RNTLPQVGDHSHLLPHGGVYKDGTKTIVYGGPRKLNSLEGG) the chain is Lumenal. The helical transmembrane segment at 72-92 (FNLPVQPWFLVILLSAAIFLL) threads the bilayer. Topologically, residues 93–106 (SCRSGHRRVCGQCH) are cytoplasmic.

This sequence belongs to the Tymovirales TGBp2 protein family.

It is found in the host endoplasmic reticulum membrane. In terms of biological role, plays a role in viral cell-to-cell propagation, by facilitating genome transport to neighboring plant cells through plasmosdesmata,. The chain is Movement protein TGB2 from Chrysanthemum morifolium (Florist's daisy).